The primary structure comprises 400 residues: 11-beta-hydroxysteroid dehydrogenase type 2 (400 aa).

82–111 (TRAVLITGCDTGFGKETAKKLDAMGFTVLA) provides a ligand contact to NAD(+). Residue serine 219 coordinates substrate. Tyrosine 232 (proton acceptor) is an active-site residue. The tract at residues 378 to 400 (PGQPGPVHDTTQDPNPSPTVSAL) is disordered. A compositionally biased stretch (polar residues) spans 389 to 400 (QDPNPSPTVSAL).

It belongs to the short-chain dehydrogenases/reductases (SDR) family. In terms of assembly, interacts with ligand-free cytoplasmic NR3C2. In terms of tissue distribution, highly expressed in kidney, adrenal gland and distal colon, and at much lower levels in lung, hypothalamus, hippocampus, and midbrain.

Its subcellular location is the microsome. It is found in the endoplasmic reticulum. The catalysed reaction is an 11beta-hydroxysteroid + NAD(+) = an 11-oxosteroid + NADH + H(+). It catalyses the reaction corticosterone + NAD(+) = 11-dehydrocorticosterone + NADH + H(+). It carries out the reaction 11beta,17beta-dihydroxyandrost-4-ene-3-one + NAD(+) = 17beta-hydroxyandrost-4-ene-3,11-dione + NADH + H(+). The enzyme catalyses 11beta-hydroxyandrost-4-ene-3,17-dione + NAD(+) = androst-4-ene-3,11,17-trione + NADH + H(+). It participates in steroid metabolism. Inhibited by glycyrrhetinic acid. Induced by progesterone, through the Ihh signaling pathway. Its function is as follows. Catalyzes the conversion of biologically active 11beta-hydroxyglucocorticoids (11beta-hydroxysteroid) such as corticosterone, to inactive 11-ketoglucocorticoids (11-oxosteroid) such as 11-dehydrocorticosterone, in the presence of NAD(+). Functions as a dehydrogenase (oxidase), thereby decreasing the concentration of active glucocorticoids, thus protecting the nonselective mineralocorticoid receptor from occupation by glucocorticoids. Plays an important role in maintaining glucocorticoids balance during preimplantation and protects the fetus from excessive maternal corticosterone exposure. Catalyzes the oxidation of 11beta-hydroxytestosterone (11beta,17beta-dihydroxyandrost-4-ene-3-one) to 11-ketotestosterone (17beta-hydroxyandrost-4-ene-3,11-dione), a major bioactive androgen. Catalyzes the conversion of 11beta-hydroxyandrostenedione (11beta-hydroxyandrost-4-ene-3,17-dione) to 11-ketoandrostenedione (androst-4-ene-3,11,17-trione), which can be further metabolized to 11-ketotestosterone. Converts 7-beta-25-dihydroxycholesterol to 7-oxo-25-hydroxycholesterol in vitro. 7-beta-25-dihydroxycholesterol (not 7-oxo-25-hydroxycholesterol) acts as a ligand for the G-protein-coupled receptor (GPCR) Epstein-Barr virus-induced gene 2 (EBI2) and may thereby regulate immune cell migration. In Rattus norvegicus (Rat), this protein is 11-beta-hydroxysteroid dehydrogenase type 2 (Hsd11b2).